The primary structure comprises 957 residues: Glycine dehydrogenase (decarboxylating) 2 (957 aa).

The residue at position 707 (Lys707) is an N6-(pyridoxal phosphate)lysine.

The protein belongs to the GcvP family. As to quaternary structure, the glycine cleavage system is composed of four proteins: P, T, L and H. Requires pyridoxal 5'-phosphate as cofactor.

It carries out the reaction N(6)-[(R)-lipoyl]-L-lysyl-[glycine-cleavage complex H protein] + glycine + H(+) = N(6)-[(R)-S(8)-aminomethyldihydrolipoyl]-L-lysyl-[glycine-cleavage complex H protein] + CO2. Functionally, the glycine cleavage system catalyzes the degradation of glycine. The P protein binds the alpha-amino group of glycine through its pyridoxal phosphate cofactor; CO(2) is released and the remaining methylamine moiety is then transferred to the lipoamide cofactor of the H protein. This Pseudomonas putida (strain ATCC 47054 / DSM 6125 / CFBP 8728 / NCIMB 11950 / KT2440) protein is Glycine dehydrogenase (decarboxylating) 2 (gcvP2).